Consider the following 434-residue polypeptide: ATP-dependent protease ATPase subunit HslU (434 aa).

ATP-binding positions include V18, 60–65 (GVGKTE), D247, E312, and R384.

The protein belongs to the ClpX chaperone family. HslU subfamily. In terms of assembly, a double ring-shaped homohexamer of HslV is capped on each side by a ring-shaped HslU homohexamer. The assembly of the HslU/HslV complex is dependent on binding of ATP.

Its subcellular location is the cytoplasm. In terms of biological role, ATPase subunit of a proteasome-like degradation complex; this subunit has chaperone activity. The binding of ATP and its subsequent hydrolysis by HslU are essential for unfolding of protein substrates subsequently hydrolyzed by HslV. HslU recognizes the N-terminal part of its protein substrates and unfolds these before they are guided to HslV for hydrolysis. This is ATP-dependent protease ATPase subunit HslU from Bradyrhizobium sp. (strain ORS 278).